Reading from the N-terminus, the 356-residue chain is (+)-(1(10)E,4E,6S,7R)-germacradien-6-ol synthase (356 aa).

The Mg(2+) site is built by Asp86 and Asp91. Residues 86 to 91 carry the DDXXXD motif motif; the sequence is DDEYCD. Arg181 contributes to the substrate binding site. Positions 227 and 231 each coordinate Mg(2+). Lys234 is a substrate binding site. A Mg(2+)-binding site is contributed by Glu235. Residue 314–315 participates in substrate binding; sequence RY.

It belongs to the terpene synthase family. The cofactor is Mg(2+).

The catalysed reaction is (2E,6E)-farnesyl diphosphate + H2O = (+)-(1(10)E,4E,6S,7R)-germacradien-6-ol + diphosphate. Its pathway is secondary metabolite biosynthesis; terpenoid biosynthesis. Functionally, catalyzes the conversion of (2E,6E)-farnesyl diphosphate (FPP) to yield the sesquiterpene (+)-(1(10)E,4E,6S,7R)-germacradien-6-ol via a putative 1,10-cyclization, which could require the abstraction of the pyrophosphate from FPP to yield the (E,E)-germacradienyl cation. The only accepted substrate is farnesyl diphosphate (FPP). This chain is (+)-(1(10)E,4E,6S,7R)-germacradien-6-ol synthase, found in Streptomyces pratensis (strain ATCC 33331 / IAF-45CD).